The following is a 598-amino-acid chain: MFS siderochrome iron transporter D (598 aa).

The tract at residues 1–34 (MLSSWQKKFFQTPEHPPAEGIAPPRDDGVPNPEP) is disordered. The Cytoplasmic portion of the chain corresponds to 1-76 (MLSSWQKKFF…AEAITLTWSK (76 aa)). Residues 77–97 (ISLGAAYFLMWLLYLVNGFQA) traverse the membrane as a helical segment. Residues 98–115 (SITGNLSAYVTSGFESHS) lie on the Extracellular side of the membrane. Asparagine 102 is a glycosylation site (N-linked (GlcNAc...) asparagine). Residues 116 to 136 (LIPVISIVSSVMSAATYMPLA) form a helical membrane-spanning segment. Residues 137-144 (KVLNLWDR) are Cytoplasmic-facing. A helical membrane pass occupies residues 145 to 165 (SIGFIIMVAFATLGLILSATC). The Extracellular segment spans residues 166-171 (HDIGTY). The chain crosses the membrane as a helical span at residues 172-192 (CAAQVFYSIGFAGIIFSVDVI). Over 193–203 (TADTSTLRDRG) the chain is Cytoplasmic. Residues 204-224 (LAYAFTSSPYIITAFGGPAAA) traverse the membrane as a helical segment. At 225-233 (EHFYDSNWR) the chain is on the extracellular side. Residues 234 to 254 (WAYGCFSIVLPVVALPMFCLL) form a helical membrane-spanning segment. Residues 255–289 (RWNRHKAKKSGLLKDKADSGRTWMESIRHYIIEFD) lie on the Cytoplasmic side of the membrane. The helical transmembrane segment at 290-310 (ILGVFFLAAGLVLFLLPFSIA) threads the bilayer. Residues 311–318 (GSTEDDWK) lie on the Extracellular side of the membrane. Residues 319-339 (SASIITMLVIGFVCLLVFALV) form a helical membrane-spanning segment. Residues 340 to 341 (ER) are Cytoplasmic-facing. A helical transmembrane segment spans residues 342–362 (FVAPVPFLPWALLASRTVLGA). Over 363-396 (CMLDVCYQIAYYCWFNYYTSYLQVVYGTSITTAG) the chain is Extracellular. A helical transmembrane segment spans residues 397 to 417 (YITSIFDVVSGVWLFIVGFLI). The Cytoplasmic portion of the chain corresponds to 418-424 (KKTNRFR). The chain crosses the membrane as a helical span at residues 425-445 (WLLFIAVPLYILGVGLMIYFR). Residues 446-450 (KPSWS) lie on the Extracellular side of the membrane. The helical transmembrane segment at 451–471 (VGYMIMCQIFIAFAGGTMIIC) threads the bilayer. Over 472–490 (QQVAVLAASDHDHAASSLA) the chain is Cytoplasmic. Residues 491–511 (FLNVFGTMGSAVGSSISGAIW) traverse the membrane as a helical segment. Over 512 to 562 (THTLPGALQRLLPDSVKADWQTIYDSLEEQLSYERGTLIRQAIALAYASTQ) the chain is Extracellular. A helical membrane pass occupies residues 563 to 583 (SKMLIAGTAIMALSLVWMFVI). Over 584–598 (RDIKLTKTQTKGVLF) the chain is Cytoplasmic.

It belongs to the major facilitator superfamily.

The protein localises to the cell membrane. Functionally, major facilitator transporter involved in fusarinine C (FsC) uptake. In contrast to TAFC-mediated iron uptake, FsC-mediated iron uptake via mirD does not play a significant role during infection. The chain is MFS siderochrome iron transporter D from Aspergillus fumigatus (strain ATCC MYA-4609 / CBS 101355 / FGSC A1100 / Af293) (Neosartorya fumigata).